The following is a 329-amino-acid chain: Ceramide synthase hyl-2 (329 aa).

An N-linked (GlcNAc...) asparagine glycan is attached at Asn22. The next 7 membrane-spanning stretches (helical) occupy residues 41–61 (VLTG…IFVP), 95–115 (ALYY…ESHL), 134–154 (VAWY…GILF), 162–182 (FWQM…SWTM), 187–207 (VGTL…VGKI), 221–241 (FAGV…FWII), and 270–290 (FIML…YILF). The TLC domain occupies 86-298 (SRMAECAMRA…LFKIAYDTIQ (213 aa)).

It belongs to the sphingosine N-acyltransferase family. Strong expression in the gut, the posterior bulb of the pharynx, the hypoderm, and unidentified cells of the head and the tail.

The protein resides in the membrane. It catalyses the reaction a very long-chain fatty acyl-CoA + a sphingoid base = an N-(very-long-chain fatty acyl)-sphingoid base + CoA + H(+). The enzyme catalyses a fatty acyl-CoA + sphinganine = an N-acylsphinganine + CoA + H(+). The catalysed reaction is docosanoyl-CoA + sphinganine = N-docosanoylsphinganine + CoA + H(+). It carries out the reaction sphinganine + tetradecanoyl-CoA = N-(tetradecanoyl)-sphinganine + CoA + H(+). It catalyses the reaction eicosanoyl-CoA + sphinganine = N-eicosanoylsphinganine + CoA + H(+). The enzyme catalyses 15-methylhexadecasphinganine + a fatty acyl-CoA = an N-acyl-15-methylhexadecasphinganine + CoA + H(+). Its pathway is lipid metabolism; sphingolipid metabolism. Catalyzes the acylation of sphingoid bases to form ceramides, which are key players in cell signaling events such as tolerances to heat, oxidation, and ultraviolet stress. C.elegans contain specific sphingoid bases, which are unique or different in structure compared to the sphingoid bases found in other animals. Two examples of these distinctive compounds are: 15-methylhexadecasphinganine and 15-methylhexadecasphing-4-enine. Exhibits substrate preference for long and very long fatty acyl-coA chains (C20-23). Required for adaptation of the nematode to anoxia. Anoxia tolerance may require one or more of the ceramide species that are either specifically or preferentially synthesized by HYL-2, and seems to be affected by a pathway that is parallel to that involving daf-2. The chain is Ceramide synthase hyl-2 (hyl-2) from Caenorhabditis elegans.